The following is a 176-amino-acid chain: Disulfide bond formation protein B (176 aa).

The Cytoplasmic segment spans residues 1–14 (MLQFLNRCSKGRGA). Residues 15 to 31 (WLLMALTALVLELVALY) form a helical membrane-spanning segment. Residues 32–49 (FQHVMLLQPCVMCIYERA) lie on the Periplasmic side of the membrane. A disulfide bridge links cysteine 41 with cysteine 44. The chain crosses the membrane as a helical span at residues 50–65 (ALFGILGASLLGAIAP). Residues 66–71 (KSPLRY) lie on the Cytoplasmic side of the membrane. The chain crosses the membrane as a helical span at residues 72 to 89 (LAIFIWIYSAWKGVQLAW). At 90–144 (THTMLQLHPSPFTTCDFFVSFPSWLPLDKWFPAVFVASGDCAVKQWEFLSLEMPQ) the chain is on the periplasmic side. Cysteine 104 and cysteine 130 are oxidised to a cystine. A helical transmembrane segment spans residues 145 to 163 (WLVGIFAAYLFIAILVLIS). Residues 164–176 (QFVKPKRRDLFSR) are Cytoplasmic-facing.

Belongs to the DsbB family.

The protein resides in the cell inner membrane. Required for disulfide bond formation in some periplasmic proteins. Acts by oxidizing the DsbA protein. This Yersinia enterocolitica serotype O:8 / biotype 1B (strain NCTC 13174 / 8081) protein is Disulfide bond formation protein B.